The sequence spans 501 residues: MTIASDAWQALADWQPQKLTDLVAADPDARLQALVRNVADIRFDFAKTHLDAAAIAILANLAEAQDFGGRRKTLFSGGIANPTENRAAEHSAERGDGAPESVHAAQALHQRMRMMIDAIEAGAFGEIRHLLHIGIGGSALGPDLLVDALGRHSDRYDVAVVSNVDGAALDEAFAKFSPEHTLVAVASKTFTTTETLLNANSALQWLDEAGVADPVGRFIALTANPGRAMEWGIDETRILPFSETVGGRYSLWSSIGFPAALALGWDAFADLLEGAAEMDRHFRLADGADNICLLAAFADQVYANRLGCQTRAVFAYDERLRLLPAYLQQLEMESNGKSVTLDGAPLAQHSAPVTWGGVGTDAQHAVFQLLHQGTHLVPVEFIVAREPDHLLDDAHHETLVANCIAQGAALMAGRASDDRARAYPGDRPSTTILLDQVSPRSLGALIAFYEHRVFANAVLLGVNPFDQFGVELGKEMAKGLAEGTVDFDPATQALMKAALGD.

The segment at 78 to 101 (GIANPTENRAAEHSAERGDGAPES) is disordered. The span at 86–97 (RAAEHSAERGDG) shows a compositional bias: basic and acidic residues. Glutamate 333 acts as the Proton donor in catalysis. Catalysis depends on residues histidine 364 and lysine 474.

This sequence belongs to the GPI family.

It is found in the cytoplasm. It carries out the reaction alpha-D-glucose 6-phosphate = beta-D-fructose 6-phosphate. It participates in carbohydrate biosynthesis; gluconeogenesis. Its pathway is carbohydrate degradation; glycolysis; D-glyceraldehyde 3-phosphate and glycerone phosphate from D-glucose: step 2/4. Functionally, catalyzes the reversible isomerization of glucose-6-phosphate to fructose-6-phosphate. In Sphingopyxis alaskensis (strain DSM 13593 / LMG 18877 / RB2256) (Sphingomonas alaskensis), this protein is Glucose-6-phosphate isomerase.